A 552-amino-acid polypeptide reads, in one-letter code: 4-coumarate--CoA ligase-like 3 (552 aa).

Residues Ser207, Ser208, Gly209, Thr210, Thr211, and Lys215 each contribute to the ATP site. Phe252 lines the (E)-4-coumaroyl-AMP pocket. Arg273 serves as a coordination point for CoA. An SBD1 region spans residues 275–346 (GLDDMMQAVE…EKYPTVNIFQ (72 aa)). 4 residues coordinate (E)-4-coumaroyl-AMP: Gly324, Gln346, Gly347, and Thr351. Residues Gln346, Gly347, Thr351, Asp432, and Arg447 each coordinate ATP. Positions 347–411 (GYALTESHGS…LKGPSISKGY (65 aa)) are SBD2. Lys449 and Lys453 together coordinate (E)-4-coumaroyl-AMP. Residues Lys455 and Gly456 each coordinate CoA. Lys538 lines the ATP pocket. Residues 550–552 (SKL) carry the Microbody targeting signal motif.

This sequence belongs to the ATP-dependent AMP-binding enzyme family. Mg(2+) is required as a cofactor.

Its subcellular location is the peroxisome. The enzyme catalyses (E)-4-coumarate + ATP + CoA = (E)-4-coumaroyl-CoA + AMP + diphosphate. The catalysed reaction is (E)-4-coumarate + ATP + H(+) = (E)-4-coumaroyl-AMP + diphosphate. It catalyses the reaction (E)-4-coumaroyl-AMP + CoA = (E)-4-coumaroyl-CoA + AMP + H(+). Carboxylate--CoA ligase that may use 4-coumarate as substrate. Follows a two-step reaction mechanism, wherein the carboxylate substrate first undergoes adenylation by ATP, followed by a thioesterification in the presence of CoA to yield the final CoA thioester. The chain is 4-coumarate--CoA ligase-like 3 from Arabidopsis thaliana (Mouse-ear cress).